Reading from the N-terminus, the 489-residue chain is Rhamnulokinase (489 aa).

Position 13 to 17 (13 to 17) interacts with ATP; it reads ASSGR. Cys68 and Cys222 form a disulfide bridge. Substrate contacts are provided by residues Gly83 and 236-238; that span reads HDT. Asp237 acts as the Proton acceptor in catalysis. Residue Thr259 participates in ATP binding. Position 296 (Asn296) interacts with substrate. Position 304 (Gln304) interacts with ATP. Cys353 and Cys370 are disulfide-bonded. Gly402 is an ATP binding site. A disulfide bridge links Cys413 with Cys417.

Belongs to the rhamnulokinase family. Mg(2+) serves as cofactor.

It carries out the reaction L-rhamnulose + ATP = L-rhamnulose 1-phosphate + ADP + H(+). The protein operates within carbohydrate degradation; L-rhamnose degradation; glycerone phosphate from L-rhamnose: step 2/3. Involved in the catabolism of L-rhamnose (6-deoxy-L-mannose). Catalyzes the transfer of the gamma-phosphate group from ATP to the 1-hydroxyl group of L-rhamnulose to yield L-rhamnulose 1-phosphate. This chain is Rhamnulokinase, found in Salmonella choleraesuis (strain SC-B67).